Here is a 67-residue protein sequence, read N- to C-terminus: Protein SlyX homolog (67 aa).

This sequence belongs to the SlyX family.

This is Protein SlyX homolog from Thiobacillus denitrificans (strain ATCC 25259 / T1).